A 206-amino-acid chain; its full sequence is Small ribosomal subunit protein uS4 (206 aa).

The region spanning 96–156 (GRLDNVVYRM…EKAKKQSRVK (61 aa)) is the S4 RNA-binding domain.

It belongs to the universal ribosomal protein uS4 family. Part of the 30S ribosomal subunit. Contacts protein S5. The interaction surface between S4 and S5 is involved in control of translational fidelity.

Its function is as follows. One of the primary rRNA binding proteins, it binds directly to 16S rRNA where it nucleates assembly of the body of the 30S subunit. Functionally, with S5 and S12 plays an important role in translational accuracy. This Erwinia tasmaniensis (strain DSM 17950 / CFBP 7177 / CIP 109463 / NCPPB 4357 / Et1/99) protein is Small ribosomal subunit protein uS4.